The chain runs to 330 residues: Autoinducer 2 import system permease protein LsrD (330 aa).

Residues 1 to 4 (MRIR) lie on the Cytoplasmic side of the membrane. Residues 5-25 (YGWELALAALLVIEIVAFGAI) form a helical membrane-spanning segment. At 26–42 (NPRMLDLNMLLFSTSDF) the chain is on the periplasmic side. The helical transmembrane segment at 43–63 (ICIGIVALPLTMVIVSGGIDI) threads the bilayer. The Cytoplasmic segment spans residues 64 to 67 (SFGS). A run of 2 helical transmembrane segments spans residues 68–88 (TIGL…PMPL) and 89–109 (AILL…GLII). Topologically, residues 110–115 (YTKVNP) are cytoplasmic. The helical transmembrane segment at 116–136 (LVITLGTLYLFAGSALLLSGM) threads the bilayer. Topologically, residues 137–159 (AGATGYEGIGGFPMAFTDFANLD) are periplasmic. A helical membrane pass occupies residues 160–180 (VLGLPVPLIIFLICLLVFWLW). The Cytoplasmic portion of the chain corresponds to 181–209 (LHKTHAGRNVFLIGQSPRVAVYSAIPVNR). The chain crosses the membrane as a helical span at residues 210 to 230 (TLCALYAMTGLASAVAAVLLV). The Periplasmic segment spans residues 231–237 (SYFGSAR). A run of 2 helical transmembrane segments spans residues 238–258 (SDLG…GGAN) and 259–279 (IYGG…VGYL). The Periplasmic segment spans residues 280-285 (QQGLQM). A helical transmembrane segment spans residues 286–306 (AGVPNQVSSALSGALLIVVVV). Over 307-330 (GRSVSLHRQQIKEWLARRANNPLP) the chain is Cytoplasmic.

It belongs to the binding-protein-dependent transport system permease family. AraH/RbsC subfamily. The complex is composed of two ATP-binding proteins (LsrA), two transmembrane proteins (LsrC and LsrD) and a solute-binding protein (LsrB).

It is found in the cell inner membrane. Part of the ABC transporter complex LsrABCD involved in autoinducer 2 (AI-2) import. Probably responsible for the translocation of the substrate across the membrane. The polypeptide is Autoinducer 2 import system permease protein LsrD (lsrD) (Escherichia coli (strain SMS-3-5 / SECEC)).